The following is a 139-amino-acid chain: Nucleoside diphosphate kinase (139 aa).

Residues lysine 10, phenylalanine 58, arginine 86, threonine 92, arginine 103, and asparagine 113 each coordinate ATP. Histidine 116 (pros-phosphohistidine intermediate) is an active-site residue.

This sequence belongs to the NDK family. Homotetramer. Mg(2+) serves as cofactor.

It is found in the cytoplasm. It catalyses the reaction a 2'-deoxyribonucleoside 5'-diphosphate + ATP = a 2'-deoxyribonucleoside 5'-triphosphate + ADP. It carries out the reaction a ribonucleoside 5'-diphosphate + ATP = a ribonucleoside 5'-triphosphate + ADP. Functionally, major role in the synthesis of nucleoside triphosphates other than ATP. The ATP gamma phosphate is transferred to the NDP beta phosphate via a ping-pong mechanism, using a phosphorylated active-site intermediate. The sequence is that of Nucleoside diphosphate kinase from Caulobacter vibrioides (strain ATCC 19089 / CIP 103742 / CB 15) (Caulobacter crescentus).